We begin with the raw amino-acid sequence, 102 residues long: MNRLKDLGTPRPRLAFMAACILLLATLPDFAQASGGLQRVNSFMAGIVTVLRGASVATVTIAIIWAGYKLLFRHADVLDVVRVVLAGLLIGASAEIARYLLT.

Residues 1–31 (MNRLKDLGTPRPRLAFMAACILLLATLPDFA) form the signal peptide. The next 2 helical transmembrane spans lie at 45–65 (AGIV…AIIW) and 77–97 (VLDV…AEIA).

This sequence belongs to the PtlA family.

It is found in the cell membrane. This chain is Type IV secretion system protein PtlA homolog (ptlA), found in Bordetella bronchiseptica (strain ATCC BAA-588 / NCTC 13252 / RB50) (Alcaligenes bronchisepticus).